A 308-amino-acid polypeptide reads, in one-letter code: Glutaminase 1 (308 aa).

Residues S64, N116, E161, N168, Y192, Y244, and V262 each coordinate substrate.

It belongs to the glutaminase family. Homotetramer.

It carries out the reaction L-glutamine + H2O = L-glutamate + NH4(+). The chain is Glutaminase 1 from Halalkalibacterium halodurans (strain ATCC BAA-125 / DSM 18197 / FERM 7344 / JCM 9153 / C-125) (Bacillus halodurans).